Consider the following 571-residue polypeptide: Protein PNS1 (571 aa).

Positions 1–96 (MNDEEKHLAA…PDFPPDYNYK (96 aa)) are disordered. At 1 to 118 (MNDEEKHLAA…AVPKPKWNDK (118 aa)) the chain is on the cytoplasmic side. Positions 15–31 (YQPNMHYQQQQEKQTGY) are enriched in polar residues. 2 stretches are compositionally biased toward low complexity: residues 39–52 (QGGY…DYYN) and 71–80 (GNPNDNYNNQ). Residues 81–90 (QPPPYTPDFP) are compositionally biased toward pro residues. Residues 119–139 (IGLVILALIFSGYLALSIIVI) traverse the membrane as a helical segment. Over 140–166 (RAYAQTHSFQGWGIYSGENDYSLNTHT) the chain is Extracellular. Residues 167 to 187 (LILYAFVLATAMVLSLLYFIA) form a helical membrane-spanning segment. Topologically, residues 188–189 (AR) are cytoplasmic. A helical membrane pass occupies residues 190-210 (VWTKQFIWITYILHLLFSWGT). Residue A211 is a topological domain, extracellular. A helical transmembrane segment spans residues 212–232 (IYYLVVGYYSAGIVFIVFAAL). Residues 233-263 (TTWWFWCSRKRIPFATIVLQTLIDVTRANPS) are Cytoplasmic-facing. The chain crosses the membrane as a helical span at residues 264–284 (VLVISAVGTVVGACFGTWFSF). At 285 to 311 (TIVSIYVKYDPDNRNPGCMTTGGSCSN) the chain is on the extracellular side. Residues 312 to 332 (GKLIGLILFAIFCGYYLTEVI) traverse the membrane as a helical segment. The Cytoplasmic portion of the chain corresponds to 333–369 (KNVIHVTISGVYGSWYYCSKSDQGMPKHAAMSSFRRA). Residues 370-390 (VTYSLGSISLGSLIVSIINFI) traverse the membrane as a helical segment. At 391-406 (RQILSVLQQDARQSGD) the chain is on the extracellular side. A helical membrane pass occupies residues 407–427 (TLATVLLCFVQCCFGVLDWLV). Residues 428 to 472 (TYFNHYAYSYIALYGKAYVPSAKATWKLMQTRGIDAMVNDSLIGS) lie on the Cytoplasmic side of the membrane. A helical membrane pass occupies residues 473-493 (VLSFGASFVAYAAALVAYCFL). The Extracellular portion of the chain corresponds to 494 to 503 (KYTDPSYNSG). The helical transmembrane segment at 504-524 (GGFYAPVVGLAFVIALQVSNI) threads the bilayer. Over 525-571 (TNVSLKSGCSTFFLALARDPEVLRVSYPQIYEEICRTYPPARDKLDI) the chain is Cytoplasmic.

It belongs to the CTL (choline transporter-like) family.

The protein resides in the cell membrane. Probably involved in transport through the plasma membrane. This chain is Protein PNS1 (PNS1), found in Yarrowia lipolytica (strain CLIB 122 / E 150) (Yeast).